A 117-amino-acid chain; its full sequence is Large ribosomal subunit protein uL22 (117 aa).

It belongs to the universal ribosomal protein uL22 family. As to quaternary structure, part of the 50S ribosomal subunit.

This protein binds specifically to 23S rRNA; its binding is stimulated by other ribosomal proteins, e.g. L4, L17, and L20. It is important during the early stages of 50S assembly. It makes multiple contacts with different domains of the 23S rRNA in the assembled 50S subunit and ribosome. Functionally, the globular domain of the protein is located near the polypeptide exit tunnel on the outside of the subunit, while an extended beta-hairpin is found that lines the wall of the exit tunnel in the center of the 70S ribosome. The protein is Large ribosomal subunit protein uL22 of Chlorobium phaeobacteroides (strain BS1).